A 198-amino-acid chain; its full sequence is Carnitine operon protein CaiE (198 aa).

The segment at 179-198 (VEENRPRLKGTTDVKPKSAQ) is disordered. Residues 180 to 198 (EENRPRLKGTTDVKPKSAQ) are compositionally biased toward basic and acidic residues.

It belongs to the transferase hexapeptide repeat family.

The protein operates within amine and polyamine metabolism; carnitine metabolism. Overproduction of CaiE stimulates the activity of CaiB and CaiD. In Salmonella agona (strain SL483), this protein is Carnitine operon protein CaiE.